Reading from the N-terminus, the 523-residue chain is Cilia- and flagella-associated protein 157 (523 aa).

The tract at residues 1–31 (MAPKKKPNKGGKEMQGKKIGGKKDASGTKTP) is disordered. A compositionally biased stretch (basic and acidic residues) spans 10-26 (GGKEMQGKKIGGKKDAS). Position 30 is a phosphothreonine (Thr-30). Coiled-coil stretches lie at residues 32–191 (ELAM…LEKK), 248–274 (VQLLQENEQLKGTQNKLCQQLEMLENT), and 302–371 (GTEE…VLIQ). The tract at residues 419–440 (QPDMGSHQDKQPQGLSKESQRI) is disordered. The segment covering 429–440 (QPQGLSKESQRI) has biased composition (polar residues).

It belongs to the CFAP157 family. In terms of assembly, interacts with TUBB and TUBA4A. Interacts with CEP350. As to expression, specifically expressed in tissues containing motile cilia.

It is found in the cytoplasm. The protein localises to the cytoskeleton. Its subcellular location is the cilium basal body. In terms of biological role, specifically required during spermatogenesis for flagellum morphogenesis and sperm motility. May be required to suppress the formation of supernumerary axonemes and ensure a correct ultrastructure. In Mus musculus (Mouse), this protein is Cilia- and flagella-associated protein 157.